The following is a 184-amino-acid chain: GTP cyclohydrolase 1 (184 aa).

Cys-75, His-78, and Cys-146 together coordinate Zn(2+).

Belongs to the GTP cyclohydrolase I family. Homomer.

It carries out the reaction GTP + H2O = 7,8-dihydroneopterin 3'-triphosphate + formate + H(+). It participates in cofactor biosynthesis; 7,8-dihydroneopterin triphosphate biosynthesis; 7,8-dihydroneopterin triphosphate from GTP: step 1/1. In Finegoldia magna (strain ATCC 29328 / DSM 20472 / WAL 2508) (Peptostreptococcus magnus), this protein is GTP cyclohydrolase 1.